The chain runs to 421 residues: Acylglycerol kinase, mitochondrial (421 aa).

Lysine 6 carries the N6-acetyllysine modification. A hydrophobic region spans residues 15-31 (TTAGLCLLTWGGHWLYG). The 142-residue stretch at 58–199 (AQVKKATVFL…LDVLQIKGEK (142 aa)) folds into the DAGKc domain. A disordered region spans residues 252–271 (ISYTGPRERPPIEPEETPPR).

It belongs to the AGK family. In terms of assembly, component of the TIM22 complex, which core is composed of TIMM22, associated with TIMM10 (TIMM10A and/or TIMM10B), TIMM9, AGK and TIMM29. Interacts with SMIM26. The cofactor is Mg(2+). In terms of tissue distribution, ubiquitously expressed.

It localises to the mitochondrion inner membrane. The protein resides in the mitochondrion intermembrane space. The enzyme catalyses a monoacylglycerol + ATP = a monoacyl-sn-glycero-3-phosphate + ADP + H(+). It carries out the reaction a 1,2-diacyl-sn-glycerol + ATP = a 1,2-diacyl-sn-glycero-3-phosphate + ADP + H(+). The catalysed reaction is an N-acylsphing-4-enine + ATP = an N-acylsphing-4-enine 1-phosphate + ADP + H(+). It catalyses the reaction 1,2-di-(9Z-octadecenoyl)-sn-glycerol + ATP = 1,2-di-(9Z-octadecenoyl)-sn-glycero-3-phosphate + ADP + H(+). The enzyme catalyses 1-(9Z-octadecenoyl)-sn-glycerol + ATP = 1-(9Z-octadecenoyl)-sn-glycero-3-phosphate + ADP + H(+). It carries out the reaction 1-(5Z,8Z,11Z,14Z-eicosatetraenoyl)-sn-glycerol + ATP = 1-(5Z,8Z,11Z,14Z-eicosatetraenoyl)-sn-glycero-3-phosphate + ADP + H(+). The catalysed reaction is a 1-acyl-sn-glycerol + ATP = a 1-acyl-sn-glycero-3-phosphate + ADP + H(+). It catalyses the reaction 1-hexadecanoyl-sn-glycerol + ATP = 1-hexadecanoyl-sn-glycero-3-phosphate + ADP + H(+). The enzyme catalyses a 2-acylglycerol + ATP = a 2-acyl-sn-glycerol 3-phosphate + ADP + H(+). It carries out the reaction 2-(5Z,8Z,11Z,14Z-eicosatetraenoyl)-glycerol + ATP = 2-(5Z,8Z,11Z,14Z-eicosatetraenoyl)-sn-glycero-3-phosphate + ADP + H(+). The catalysed reaction is N-(hexanoyl)sphing-4-enine + ATP = N-hexanoylsphing-4-enine 1-phosphate + ADP + H(+). The protein operates within lipid metabolism; glycerolipid metabolism. Both the ceramide and diacylglycerol kinase activities are inhibited by sphingosine and stimulated by cardiolipin. Both activities are stimulated by calcium when magnesium concentrations are low but inhibited by calcium when magnesium concentrations are high. Lipid kinase that can phosphorylate both monoacylglycerol and diacylglycerol to form lysophosphatidic acid (LPA) and phosphatidic acid (PA), respectively. Phosphorylates ceramide but not sphingosine. Phosphorylates 1,2-dioleoylglycerol more rapidly than 2,3-dioleoylglycerol. Independently of its lipid kinase activity, acts as a component of the TIM22 complex. The TIM22 complex mediates the import and insertion of multi-pass transmembrane proteins into the mitochondrial inner membrane by forming a twin-pore translocase that uses the membrane potential as the external driving force. In the TIM22 complex, required for the import of a subset of metabolite carriers into mitochondria, such as ANT1/SLC25A4 and SLC25A24, while it is not required for the import of TIMM23. Overexpression increases the formation and secretion of LPA, resulting in transactivation of EGFR and activation of the downstream MAPK signaling pathway, leading to increased cell growth. This Mus musculus (Mouse) protein is Acylglycerol kinase, mitochondrial.